The following is a 350-amino-acid chain: Ion-translocating oxidoreductase complex subunit D (350 aa).

5 consecutive transmembrane segments (helical) span residues 15–35, 36–56, 67–87, 88–108, and 122–142; these read QTQT…LAQT, WFFG…ALGA, PIKP…IGLS, LPPL…IIIA, and PAMV…TSWL. An FMN phosphoryl threonine modification is found at threonine 186. 4 helical membrane passes run 213–233, 242–262, 264–284, and 299–316; these read WGGI…LFLL, IPGA…LMTP, ATAT…AFFI, and LVYG…RRFG.

Belongs to the NqrB/RnfD family. As to quaternary structure, the complex is composed of six subunits: RnfA, RnfB, RnfC, RnfD, RnfE and RnfG. FMN serves as cofactor.

The protein resides in the cell inner membrane. Part of a membrane-bound complex that couples electron transfer with translocation of ions across the membrane. The chain is Ion-translocating oxidoreductase complex subunit D from Aeromonas salmonicida (strain A449).